The sequence spans 513 residues: GMP synthase [glutamine-hydrolyzing] (513 aa).

Residues 9 to 198 (LILVLDFGSQ…VRRVCDCIGE (190 aa)) form the Glutamine amidotransferase type-1 domain. Residue Cys86 is the Nucleophile of the active site. Residues His172 and Glu174 contribute to the active site. Residues 199 to 388 (WSMENFIEIE…LGIPEHLVWR (190 aa)) form the GMPS ATP-PPase domain. 226–232 (SGGVDSS) contacts ATP.

As to quaternary structure, homodimer.

It carries out the reaction XMP + L-glutamine + ATP + H2O = GMP + L-glutamate + AMP + diphosphate + 2 H(+). Its pathway is purine metabolism; GMP biosynthesis; GMP from XMP (L-Gln route): step 1/1. Catalyzes the synthesis of GMP from XMP. This chain is GMP synthase [glutamine-hydrolyzing], found in Staphylococcus saprophyticus subsp. saprophyticus (strain ATCC 15305 / DSM 20229 / NCIMB 8711 / NCTC 7292 / S-41).